A 473-amino-acid polypeptide reads, in one-letter code: UDP-glycosyltransferase 91D2 (473 aa).

The Proton acceptor role is filled by H26. H26 lines the an anthocyanidin pocket. D121 serves as the catalytic Charge relay. Residues A344, Q346, H361, S366, and E369 each coordinate UDP-alpha-D-glucose. G384 contributes to the an anthocyanidin binding site. UDP-alpha-D-glucose-binding residues include D385 and Q386.

Belongs to the UDP-glycosyltransferase family.

The enzyme catalyses steviolmonoside + UDP-alpha-D-glucose = steviolbioside + UDP + H(+). The catalysed reaction is rubusoside + UDP-alpha-D-glucose = stevioside + UDP + H(+). It carries out the reaction stevioside + UDP-alpha-D-glucose = rebaudioside E + UDP + H(+). It catalyses the reaction rebaudioside A + UDP-alpha-D-glucose = rebaudioside D + UDP + H(+). Functionally, involved in the biosynthesis of steviol glycosides in leaves. Converts the mono-glycoside steviolmonoside to the bi-glycoside steviolbioside. Converts the bi-glycoside rubusoside to the tri-glycoside stevioside. Converts the tri-glycoside stevioside to the tetra-glycoside rebaudioside E. Converts the tetra-glycoside rebaudioside A to the penta-glycoside rebaudioside E. In Stevia rebaudiana (Stevia), this protein is UDP-glycosyltransferase 91D2.